A 505-amino-acid polypeptide reads, in one-letter code: RNA-splicing ligase RtcB homolog (505 aa).

Mn(2+)-binding residues include Asp-119, Cys-122, His-227, and His-259. 226-230 serves as a coordination point for GMP; sequence NHYAE. The residue at position 300 (Ser-300) is a Phosphoserine. Residue His-353 participates in Mn(2+) binding. Residues 353–354, 402–405, Ser-409, and 428–431 each bind GMP; these read HN, GGTM, and HGAG. His-428 serves as the catalytic GMP-histidine intermediate. A Glycyl lysine isopeptide (Lys-Gly) (interchain with G-Cter in SUMO2) cross-link involves residue Lys-496. Lys-504 serves as a coordination point for GMP.

This sequence belongs to the RtcB family. Catalytic component of the tRNA-splicing ligase complex. The cofactor is Mn(2+).

The protein localises to the nucleus. It localises to the cytoplasm. It carries out the reaction a 3'-end 3'-phospho-ribonucleotide-RNA + a 5'-end dephospho-ribonucleoside-RNA + GTP = a ribonucleotidyl-ribonucleotide-RNA + GMP + diphosphate. The catalysed reaction is a 3'-end 2',3'-cyclophospho-ribonucleotide-RNA + a 5'-end dephospho-ribonucleoside-RNA + GTP + H2O = a ribonucleotidyl-ribonucleotide-RNA + GMP + diphosphate + H(+). Catalytic subunit of the tRNA-splicing ligase complex that acts by directly joining spliced tRNA halves to mature-sized tRNAs by incorporating the precursor-derived splice junction phosphate into the mature tRNA as a canonical 3',5'-phosphodiester. May act as an RNA ligase with broad substrate specificity, and may function toward other RNAs. The protein is RNA-splicing ligase RtcB homolog of Macaca fascicularis (Crab-eating macaque).